A 343-amino-acid polypeptide reads, in one-letter code: Phenylalanine--tRNA ligase alpha subunit (343 aa).

A Mg(2+)-binding site is contributed by E264.

It belongs to the class-II aminoacyl-tRNA synthetase family. Phe-tRNA synthetase alpha subunit type 1 subfamily. In terms of assembly, tetramer of two alpha and two beta subunits. Requires Mg(2+) as cofactor.

It localises to the cytoplasm. It carries out the reaction tRNA(Phe) + L-phenylalanine + ATP = L-phenylalanyl-tRNA(Phe) + AMP + diphosphate + H(+). The chain is Phenylalanine--tRNA ligase alpha subunit from Azoarcus sp. (strain BH72).